The chain runs to 404 residues: Cysteine desulfurase IscS (404 aa).

Pyridoxal 5'-phosphate-binding positions include 75–76 (AT), N155, Q183, and 203–205 (SAH). K206 bears the N6-(pyridoxal phosphate)lysine mark. T243 lines the pyridoxal 5'-phosphate pocket. The active-site Cysteine persulfide intermediate is the C328. C328 is a binding site for [2Fe-2S] cluster.

This sequence belongs to the class-V pyridoxal-phosphate-dependent aminotransferase family. NifS/IscS subfamily. Homodimer. Forms a heterotetramer with IscU, interacts with other sulfur acceptors. Requires pyridoxal 5'-phosphate as cofactor.

It is found in the cytoplasm. The catalysed reaction is (sulfur carrier)-H + L-cysteine = (sulfur carrier)-SH + L-alanine. Its pathway is cofactor biosynthesis; iron-sulfur cluster biosynthesis. Master enzyme that delivers sulfur to a number of partners involved in Fe-S cluster assembly, tRNA modification or cofactor biosynthesis. Catalyzes the removal of elemental sulfur atoms from cysteine to produce alanine. Functions as a sulfur delivery protein for Fe-S cluster synthesis onto IscU, an Fe-S scaffold assembly protein, as well as other S acceptor proteins. The sequence is that of Cysteine desulfurase IscS from Neisseria meningitidis serogroup C (strain 053442).